A 191-amino-acid chain; its full sequence is Molybdenum cofactor guanylyltransferase (191 aa).

GTP-binding positions include 13 to 15 (LAG), Lys-26, Asp-72, and Asp-102. Asp-102 is a Mg(2+) binding site.

This sequence belongs to the MobA family. Monomer. Mg(2+) serves as cofactor.

The protein resides in the cytoplasm. It catalyses the reaction Mo-molybdopterin + GTP + H(+) = Mo-molybdopterin guanine dinucleotide + diphosphate. In terms of biological role, transfers a GMP moiety from GTP to Mo-molybdopterin (Mo-MPT) cofactor (Moco or molybdenum cofactor) to form Mo-molybdopterin guanine dinucleotide (Mo-MGD) cofactor. In Pseudomonas putida (strain ATCC 700007 / DSM 6899 / JCM 31910 / BCRC 17059 / LMG 24140 / F1), this protein is Molybdenum cofactor guanylyltransferase.